A 157-amino-acid chain; its full sequence is S-ribosylhomocysteine lyase (157 aa).

H54, H58, and C124 together coordinate Fe cation.

This sequence belongs to the LuxS family. Homodimer. Fe cation is required as a cofactor.

It carries out the reaction S-(5-deoxy-D-ribos-5-yl)-L-homocysteine = (S)-4,5-dihydroxypentane-2,3-dione + L-homocysteine. In terms of biological role, involved in the synthesis of autoinducer 2 (AI-2) which is secreted by bacteria and is used to communicate both the cell density and the metabolic potential of the environment. The regulation of gene expression in response to changes in cell density is called quorum sensing. Catalyzes the transformation of S-ribosylhomocysteine (RHC) to homocysteine (HC) and 4,5-dihydroxy-2,3-pentadione (DPD). In Oenococcus oeni (strain ATCC BAA-331 / PSU-1), this protein is S-ribosylhomocysteine lyase.